A 212-amino-acid chain; its full sequence is Cytochrome c biogenesis ATP-binding export protein CcmA (212 aa).

Residues 8–212 (LQATALACER…RSIDLAKGSA (205 aa)) form the ABC transporter domain. Position 40 to 47 (40 to 47 (GPNGSGKT)) interacts with ATP.

This sequence belongs to the ABC transporter superfamily. CcmA exporter (TC 3.A.1.107) family. The complex is composed of two ATP-binding proteins (CcmA) and two transmembrane proteins (CcmB).

Its subcellular location is the cell inner membrane. The catalysed reaction is heme b(in) + ATP + H2O = heme b(out) + ADP + phosphate + H(+). In terms of biological role, part of the ABC transporter complex CcmAB involved in the biogenesis of c-type cytochromes; once thought to export heme, this seems not to be the case, but its exact role is uncertain. Responsible for energy coupling to the transport system. This chain is Cytochrome c biogenesis ATP-binding export protein CcmA, found in Pseudomonas syringae pv. tomato (strain ATCC BAA-871 / DC3000).